The primary structure comprises 241 residues: Protocatechuate 3,4-dioxygenase beta chain (241 aa).

Fe cation is bound by residues Tyr109, Tyr148, His161, and His163.

It belongs to the intradiol ring-cleavage dioxygenase family. As to quaternary structure, the enzyme is an oligomer of 12 copies of the alpha and beta chains. Fe(3+) serves as cofactor.

It catalyses the reaction 3,4-dihydroxybenzoate + O2 = 3-carboxy-cis,cis-muconate + 2 H(+). It functions in the pathway aromatic compound metabolism; beta-ketoadipate pathway; 3-carboxy-cis,cis-muconate from 3,4-dihydroxybenzoate: step 1/1. In terms of biological role, plays an essential role in the utilization of numerous aromatic and hydroaromatic compounds via the beta-ketoadipate pathway. The chain is Protocatechuate 3,4-dioxygenase beta chain (pcaH) from Acinetobacter baylyi (strain ATCC 33305 / BD413 / ADP1).